The chain runs to 74 residues: Exodeoxyribonuclease 7 small subunit (74 aa).

Belongs to the XseB family. Heterooligomer composed of large and small subunits.

The protein localises to the cytoplasm. The catalysed reaction is Exonucleolytic cleavage in either 5'- to 3'- or 3'- to 5'-direction to yield nucleoside 5'-phosphates.. Bidirectionally degrades single-stranded DNA into large acid-insoluble oligonucleotides, which are then degraded further into small acid-soluble oligonucleotides. This is Exodeoxyribonuclease 7 small subunit from Neisseria meningitidis serogroup A / serotype 4A (strain DSM 15465 / Z2491).